The chain runs to 264 residues: Thymidylate synthase (264 aa).

Position 21 (Arg21) interacts with dUMP. His51 contacts (6R)-5,10-methylene-5,6,7,8-tetrahydrofolate. 126 to 127 (RR) is a dUMP binding site. Cys146 (nucleophile) is an active-site residue. Residues 166-169 (RSAD), Asn177, and 207-209 (HIY) contribute to the dUMP site. Asp169 is a (6R)-5,10-methylene-5,6,7,8-tetrahydrofolate binding site. Ser263 lines the (6R)-5,10-methylene-5,6,7,8-tetrahydrofolate pocket.

Belongs to the thymidylate synthase family. Bacterial-type ThyA subfamily. Homodimer.

Its subcellular location is the cytoplasm. The catalysed reaction is dUMP + (6R)-5,10-methylene-5,6,7,8-tetrahydrofolate = 7,8-dihydrofolate + dTMP. Its pathway is pyrimidine metabolism; dTTP biosynthesis. In terms of biological role, catalyzes the reductive methylation of 2'-deoxyuridine-5'-monophosphate (dUMP) to 2'-deoxythymidine-5'-monophosphate (dTMP) while utilizing 5,10-methylenetetrahydrofolate (mTHF) as the methyl donor and reductant in the reaction, yielding dihydrofolate (DHF) as a by-product. This enzymatic reaction provides an intracellular de novo source of dTMP, an essential precursor for DNA biosynthesis. In Bacillus velezensis (strain DSM 23117 / BGSC 10A6 / LMG 26770 / FZB42) (Bacillus amyloliquefaciens subsp. plantarum), this protein is Thymidylate synthase.